The primary structure comprises 151 residues: Alpha-latroinsectotoxin-Lh1a (151 aa).

8 ANK repeats span residues 21 to 37 (TDVT…DLNA), 41 to 52 (ILIRNTNAVINI), 56 to 80 (VGLT…YLND), 84 to 104 (NGMT…VDFL), 105 to 116 (KWTPLHLAILFK), 117 to 125 (QLVIELLAK), 126 to 146 (TFFD…AVEK), and 147 to 151 (YIAAR).

This sequence belongs to the cationic peptide 01 (latrotoxin) family. 02 (alpha-latroinsectotoxin) subfamily. In terms of assembly, homotetramer in membranes. Expressed by the venom gland.

The protein resides in the secreted. Its subcellular location is the target cell membrane. In terms of biological role, insecticidal presynaptic neurotoxin that induces massive neurotransmitter release at insect (but not vertebrate) neuromuscular junctions. Native toxin forms cation-permeable pores (with high permeability to calcium) in lipid membranes locust muscle membrane and artificial lipid bilayers. May bind to insect neurexin-1 homolog, insect adhesion G protein-coupled receptor L1 homolog, and insect receptor-type tyrosine-protein phosphatase S homolog, and induces neurotransmitter exocytosis both by forming tetrameric pores in membranes and signaling via G protein-coupled receptor. Oligomerization is a process independent of divalent cations. The toxin forms channels with 0.55-0.58 nm entrance diameter and a relatively small conductance in planar phospholipid membranes. In Latrodectus hasselti (Redback spider), this protein is Alpha-latroinsectotoxin-Lh1a.